The primary structure comprises 143 residues: Transcriptional regulator MraZ (143 aa).

SpoVT-AbrB domains are found at residues 5–47 (EYQH…PKDE) and 76–119 (AIES…SKDN).

It belongs to the MraZ family. As to quaternary structure, forms oligomers.

The protein resides in the cytoplasm. It localises to the nucleoid. In Oenococcus oeni (strain ATCC BAA-331 / PSU-1), this protein is Transcriptional regulator MraZ.